The chain runs to 484 residues: 6-phosphogluconate dehydrogenase, decarboxylating (484 aa).

NADP(+) is bound by residues 11–16 (GLAVMG), 34–36 (NRT), 76–78 (VRA), and Asn-104. Residues Asn-104 and 130–132 (SGG) contribute to the substrate site. Catalysis depends on Lys-185, which acts as the Proton acceptor. Residue 188–189 (HN) coordinates substrate. The active-site Proton donor is Glu-192. Residues Tyr-193, Lys-262, Arg-289, Arg-447, and His-453 each coordinate substrate.

Belongs to the 6-phosphogluconate dehydrogenase family. Homodimer.

It catalyses the reaction 6-phospho-D-gluconate + NADP(+) = D-ribulose 5-phosphate + CO2 + NADPH. Its pathway is carbohydrate degradation; pentose phosphate pathway; D-ribulose 5-phosphate from D-glucose 6-phosphate (oxidative stage): step 3/3. Its function is as follows. Catalyzes the oxidative decarboxylation of 6-phosphogluconate to ribulose 5-phosphate and CO(2), with concomitant reduction of NADP to NADPH. The protein is 6-phosphogluconate dehydrogenase, decarboxylating (gnd) of Haemophilus influenzae (strain ATCC 51907 / DSM 11121 / KW20 / Rd).